The primary structure comprises 122 residues: Large ribosomal subunit protein uL14 (122 aa).

Belongs to the universal ribosomal protein uL14 family. As to quaternary structure, part of the 50S ribosomal subunit. Forms a cluster with proteins L3 and L19. In the 70S ribosome, L14 and L19 interact and together make contacts with the 16S rRNA in bridges B5 and B8.

Its function is as follows. Binds to 23S rRNA. Forms part of two intersubunit bridges in the 70S ribosome. In Trichlorobacter lovleyi (strain ATCC BAA-1151 / DSM 17278 / SZ) (Geobacter lovleyi), this protein is Large ribosomal subunit protein uL14.